The primary structure comprises 216 residues: NKG2-D type II integral membrane protein (216 aa).

Topologically, residues Met-1–Ser-51 are cytoplasmic. The helical; Signal-anchor for type II membrane protein transmembrane segment at Pro-52–Thr-72 threads the bilayer. Residues Ile-73–Val-216 are Extracellular-facing. 2 disulfides stabilise this stretch: Cys-96-Cys-105 and Cys-99-Cys-110. In terms of domain architecture, C-type lectin spans Pro-98 to Gln-213. 4 N-linked (GlcNAc...) asparagine glycosylation sites follow: Asn-115, Asn-131, Asn-163, and Asn-202. Disulfide bonds link Cys-127-Cys-211 and Cys-189-Cys-203.

In terms of assembly, homodimer; disulfide-linked. Heterohexamer composed of two subunits of KLRK1 and four subunits of HCST/DAP10. Interacts (via transmembrane domain) with HCST/DAP10 (via transmembrane domain); the interaction is required for KLRK1 NK cell surface and induces NK cell-mediated cytotoxicity. Can form disulfide-bonded heterodimer with CD94. Interacts with CEACAM1; recruits PTPN6 that dephosphorylates VAV1.

The protein resides in the cell membrane. Functionally, functions as an activating and costimulatory receptor involved in immunosurveillance upon binding to various cellular stress-inducible ligands displayed at the surface of autologous tumor cells and virus-infected cells. Provides both stimulatory and costimulatory innate immune responses on activated killer (NK) cells, leading to cytotoxic activity. Acts as a costimulatory receptor for T-cell receptor (TCR) in CD8(+) T-cell-mediated adaptive immune responses by amplifying T-cell activation. Stimulates perforin-mediated elimination of ligand-expressing tumor cells. Signaling involves calcium influx, culminating in the expression of TNF-alpha. Participates in NK cell-mediated bone marrow graft rejection. May play a regulatory role in differentiation and survival of NK cells. Binds to ligands belonging to various subfamilies of MHC class I-related glycoproteins. The chain is NKG2-D type II integral membrane protein (KLRK1) from Pongo pygmaeus (Bornean orangutan).